Consider the following 1153-residue polypeptide: Probable RNA-dependent RNA polymerase 3 (1153 aa).

The protein belongs to the RdRP family. As to expression, expressed in shoot apical meristem (SAM) and panicles.

The enzyme catalyses RNA(n) + a ribonucleoside 5'-triphosphate = RNA(n+1) + diphosphate. Probably involved in the RNA silencing pathway and required for the generation of small interfering RNAs (siRNAs). This chain is Probable RNA-dependent RNA polymerase 3 (RDR3), found in Oryza sativa subsp. japonica (Rice).